The sequence spans 398 residues: DNA replication and repair protein RecF (398 aa).

Residue 30-37 (GSNGLGKT) coordinates ATP.

The protein belongs to the RecF family.

It localises to the cytoplasm. Its function is as follows. The RecF protein is involved in DNA metabolism; it is required for DNA replication and normal SOS inducibility. RecF binds preferentially to single-stranded, linear DNA. It also seems to bind ATP. This chain is DNA replication and repair protein RecF, found in Renibacterium salmoninarum (strain ATCC 33209 / DSM 20767 / JCM 11484 / NBRC 15589 / NCIMB 2235).